The following is a 382-amino-acid chain: Gas vesicle protein C1 (382 aa).

Positions 1–18 (MSVTDKRDEMSTARDKFA) are enriched in basic and acidic residues. The interval 1–21 (MSVTDKRDEMSTARDKFAESQ) is disordered. 7 consecutive repeat copies span residues 22-60 (QEFE…TNTT), 61-92 (DAFH…REMQ), 93-130 (DAFE…NSTH), 131-168 (GAFE…IAVQ), 169-200 (DAFD…DATA), 201-240 (DAFA…ETTE), and 241-284 (DAFV…VSPD). Residues 22–284 (QEFESYADEF…VEAEAEVSPD (263 aa)) form a 7 X approximate tandem repeats region. A compositionally biased stretch (acidic residues) spans 260–302 (GAAEAEAEPVEADADVEAEAEVSPDEAGGESAGTEEEETEPAE). A disordered region spans residues 260 to 382 (GAAEAEAEPV…DVPLRPDDKT (123 aa)). Residues 303–316 (VETAAPEVEGSPAD) show a composition bias toward low complexity. Acidic residues predominate over residues 317 to 336 (TADEAEDTEAEEETEEEAPE). A compositionally biased stretch (basic and acidic residues) spans 365–382 (EYRDEYGEDVPLRPDDKT).

Belongs to the halobacterial gas vesicle GvpC family. In terms of assembly, forms homodimers, interacts with GvpF1, GvpH1, GvpI1, GvpL1, GvpN1 and GvpO1 via its C-terminus (residues 329-382).

The protein localises to the gas vesicle. The protein resides in the cytoplasm. Its function is as follows. Confers stability, involved in shaping gas vesicles. Gas vesicles are hollow, gas filled proteinaceous nanostructures found in several microbial planktonic microorganisms. They allow positioning of halobacteria at the optimal depth for growth in the poorly aerated, shallow brine pools of their habitat. Functionally, expression of a 9.5 kb p-vac DNA fragment containing 2 divergently transcribed regions (gvpD-gvpE-gvpF-gvpG-gvpH-gvpI-gvpJ-gvpK-gvpL-gvpM and gvpA-gvpC-gvpN-gvpO) allows H.volcanii to produce gas vesicles. A similar region restores gas vesicle production in H.halobium without the p-vac locus, but it still has the c-vac locus. This is Gas vesicle protein C1 (gvpC1) from Halobacterium salinarum (strain ATCC 700922 / JCM 11081 / NRC-1) (Halobacterium halobium).